The primary structure comprises 975 residues: Glycine dehydrogenase (decarboxylating) (975 aa).

N6-(pyridoxal phosphate)lysine is present on Lys-702.

The protein belongs to the GcvP family. In terms of assembly, the glycine cleavage system is composed of four proteins: P, T, L and H. Pyridoxal 5'-phosphate is required as a cofactor.

The catalysed reaction is N(6)-[(R)-lipoyl]-L-lysyl-[glycine-cleavage complex H protein] + glycine + H(+) = N(6)-[(R)-S(8)-aminomethyldihydrolipoyl]-L-lysyl-[glycine-cleavage complex H protein] + CO2. The glycine cleavage system catalyzes the degradation of glycine. The P protein binds the alpha-amino group of glycine through its pyridoxal phosphate cofactor; CO(2) is released and the remaining methylamine moiety is then transferred to the lipoamide cofactor of the H protein. The protein is Glycine dehydrogenase (decarboxylating) of Xanthomonas campestris pv. campestris (strain 8004).